The following is a 552-amino-acid chain: Hydroxylamine reductase (552 aa).

Residues Cys3, Cys6, Cys18, and Cys25 each coordinate [2Fe-2S] cluster. Residues His250, Glu274, Cys318, Cys406, Cys434, Cys459, Glu493, and Lys495 each contribute to the hybrid [4Fe-2O-2S] cluster site. Position 406 is a cysteine persulfide (Cys406).

The protein belongs to the HCP family. [2Fe-2S] cluster serves as cofactor. The cofactor is hybrid [4Fe-2O-2S] cluster.

It is found in the cytoplasm. It catalyses the reaction A + NH4(+) + H2O = hydroxylamine + AH2 + H(+). Functionally, catalyzes the reduction of hydroxylamine to form NH(3) and H(2)O. The polypeptide is Hydroxylamine reductase (Shewanella woodyi (strain ATCC 51908 / MS32)).